Reading from the N-terminus, the 176-residue chain is Sigma intracellular receptor 2 (176 aa).

Topologically, residues 1 to 9 (MGAPATRRC) are cytoplasmic. A helical membrane pass occupies residues 10–30 (VEWLLGLYFLSHIPITLFMDL). The 149-residue stretch at 10 to 158 (VEWLLGLYFL…PYLLIPFILL (149 aa)) folds into the EXPERA domain. The Lumenal portion of the chain corresponds to 31–68 (QAVLPRELYPVEFRNLLKWYAKEFKDPLLQEPPAWFKS). Residues 69–89 (FLFCELVFQLPFFPIATYAFL) traverse the membrane as a helical segment. Cholesterol-binding residues include Val75 and Gln77. The Cytoplasmic portion of the chain corresponds to 90–99 (KGSCKWIRTP). Residues 100-120 (AIIYSVHTMTTLIPILSTFLF) traverse the membrane as a helical segment. The tract at residues 108–176 (MTTLIPILST…YKYEEKRKKK (69 aa)) is required for interaction with Hst1/HTN1. Residues 121–140 (EDFSKASGFKGQRPETLHER) lie on the Lumenal side of the membrane. A helical transmembrane segment spans residues 141–161 (LTLVSVYAPYLLIPFILLIFM). Over 162–176 (LRSPYYKYEEKRKKK) the chain is Cytoplasmic. The short motif at 172-176 (KRKKK) is the ER retention motif element.

It belongs to the TMEM97/sigma-2 receptor family. In terms of assembly, homodimer. Interacts with NPC1; the interaction impairs NPC1-mediated cholesterol transport. Interacts with PGRMC1 and LDLR; the interaction increases LDL internalization. Interacts with histatin 1/HTN1; the interaction induces HTN1-stimulating wound healing. Interacts with TSPO. Forms a complex with TSPO and PGRMC1; the interaction occurs in MIA PaCa-2 cells but not in MCF7 cells. Widely expressed in normal tissues. Expressed in pancreatic, renal, breast, colon, ovarian surface epithelial (OSE) cells. Highly expressed in various proliferating cancer cells.

The protein resides in the rough endoplasmic reticulum membrane. It localises to the nucleus membrane. Its function is as follows. Sigma-2 receptor which contributes to ameliorate dysfunctional cellular processes and slow degenerative progression by regulating cell functions including cholesterol biosynthesis/trafficking, membrane trafficking, autophagy, lipid membrane-bound protein trafficking, and receptor stabilization at the cell surface. Forms a ternary complex with PGRMC1 receptor and low density lipoprotein receptor/LDLR at the plasma membrane, which increases LDLR-mediated LDL cholesterol internalization. Decreases lysosomal sterol transporter NPC1 availability to the cell, probably through NPC1-binding, hence controlling lipid transport, including cholesterol and LBPA, outside of late endosome/lysosome. Binds regio- and stereoselective ligand 20(S)-hydroxycholesterol (20(S)-OHC) which enhances TMEM97-NPC1 interaction and decreases TMEM97-PGRMC1 and TMEM97-TSPO interactions, thereby linking OHC binding to cholesterol homeostasis. Also able to bind cholesterol. Binds histatin 1 (Hst 1)/HN1 salivary peptide at the ER membrane, which is critical for increasing mitochondria-ER contacts and stimulating Hst1 wound healing properties. May alter the activity of some cytochrome P450 proteins. Although shows homologies with sterol isomerases (EXPERA domain), not able to catalyze sterol isomerization. However, may act as sensors of these molecules. Acts as a quality control factor in the ER, promoting the proteolytic degradation of nonproductive and extramitochondrial precursor proteins in the ER membrane thus removing them from the ER surface. The protein is Sigma intracellular receptor 2 of Homo sapiens (Human).